A 212-amino-acid chain; its full sequence is MQLTHFGHSCLLAEFGQTRLLFDPGTFSHGFEGITGLSAILITHQHPDHIDVTRLPTLLEDNPAAELYADPQTAAQLGEPWRAVHVGDELPLAELTVRAVGGCHAVIHPEIPVIENISYLVGDSKHRARLMHPGDALFVPGEQVDVLATPAAAPWMKISEAVDYLRAVAPARAVPIHQAIVAPDARGIYYGRLTEMTTTDFQVLPEESAVTF.

This chain is Protein Rv0786c, found in Mycobacterium tuberculosis (strain ATCC 25618 / H37Rv).